The primary structure comprises 896 residues: Protein argonaute 9 (896 aa).

The PAZ domain occupies 267–380; that stretch reads PVVDFLLANQ…FPIEFCNLVS (114 aa). The Piwi domain occupies 550–857; sequence FLLCILAERK…AAAQMGTVMK (308 aa).

Belongs to the argonaute family. Ago subfamily. In terms of tissue distribution, expressed in embryonic shoot apex region, pollen and developing ovules.

Its function is as follows. Involved in RNA-mediated post-transcriptional gene silencing (PTGS). Main component of the RNA-induced silencing complex (RISC) that binds to a short guide RNA such as a microRNA (miRNA) or small interfering RNA (siRNA). RISC uses the mature miRNA or siRNA as a guide for slicer-directed cleavage of homologous mRNAs to repress gene expression. Associates preferentially with small RNAs of 24 nucleotide in length with a 5' terminal adenosine. Interacts with 24 nucleotide sRNAs derived from transposable elements (TEs). Required to silence pericentrometric-located TEs in female gametes and their accessory cells. Necessary to inactivate a significant proportion of long terminal repeat retrotransposons (LTRs) in the ovule. Required to specify cell fate in ovule. Involved in the control of female gamete formation by restricting the specification of gametophyte precursors in a dosage-dependent, non-cell-autonomous manner. Targeted by turnip yellows virus (TuYV) protein P0 (via F-box-like domain) for probable proteasome degradation and thereby inactivating AGO9 function in RNA silencing. This Arabidopsis thaliana (Mouse-ear cress) protein is Protein argonaute 9 (AGO9).